The chain runs to 393 residues: S-adenosylmethionine synthase (393 aa).

His-16 provides a ligand contact to ATP. Residue Asp-18 participates in Mg(2+) binding. K(+) is bound at residue Glu-44. Positions 57 and 100 each coordinate L-methionine. The tract at residues 100-110 (QSQDIAQGVDK) is flexible loop. Residues 167-169 (DAK), 238-239 (RF), Asp-247, 253-254 (RK), Ala-270, and Lys-274 contribute to the ATP site. Residue Asp-247 coordinates L-methionine. Lys-278 lines the L-methionine pocket.

The protein belongs to the AdoMet synthase family. As to quaternary structure, homotetramer; dimer of dimers. Mg(2+) is required as a cofactor. The cofactor is K(+).

It is found in the cytoplasm. The enzyme catalyses L-methionine + ATP + H2O = S-adenosyl-L-methionine + phosphate + diphosphate. It participates in amino-acid biosynthesis; S-adenosyl-L-methionine biosynthesis; S-adenosyl-L-methionine from L-methionine: step 1/1. In terms of biological role, catalyzes the formation of S-adenosylmethionine (AdoMet) from methionine and ATP. The overall synthetic reaction is composed of two sequential steps, AdoMet formation and the subsequent tripolyphosphate hydrolysis which occurs prior to release of AdoMet from the enzyme. In Delftia acidovorans (strain DSM 14801 / SPH-1), this protein is S-adenosylmethionine synthase.